A 954-amino-acid chain; its full sequence is Bifunctional glutamine synthetase adenylyltransferase/adenylyl-removing enzyme (954 aa).

The adenylyl removase stretch occupies residues 1–450; the sequence is MENISNKPLS…HFIETVGGRT (450 aa). Residues 454 to 954 are adenylyl transferase; the sequence is GADLWTQQLW…MDIYQRILVD (501 aa).

The protein belongs to the GlnE family. Mg(2+) serves as cofactor.

The enzyme catalyses [glutamine synthetase]-O(4)-(5'-adenylyl)-L-tyrosine + phosphate = [glutamine synthetase]-L-tyrosine + ADP. It catalyses the reaction [glutamine synthetase]-L-tyrosine + ATP = [glutamine synthetase]-O(4)-(5'-adenylyl)-L-tyrosine + diphosphate. In terms of biological role, involved in the regulation of glutamine synthetase GlnA, a key enzyme in the process to assimilate ammonia. When cellular nitrogen levels are high, the C-terminal adenylyl transferase (AT) inactivates GlnA by covalent transfer of an adenylyl group from ATP to specific tyrosine residue of GlnA, thus reducing its activity. Conversely, when nitrogen levels are low, the N-terminal adenylyl removase (AR) activates GlnA by removing the adenylyl group by phosphorolysis, increasing its activity. The regulatory region of GlnE binds the signal transduction protein PII (GlnB) which indicates the nitrogen status of the cell. In Shewanella woodyi (strain ATCC 51908 / MS32), this protein is Bifunctional glutamine synthetase adenylyltransferase/adenylyl-removing enzyme.